A 153-amino-acid chain; its full sequence is TM2 domain-containing protein DDB_G0277895 (153 aa).

The 48-residue stretch at 3–50 folds into the TM2 domain; it reads QKSVCVTYLLWLFFGLFGIHRFYLNRPCSGVLYLFTCGCFFIGWFIDI. 2 consecutive transmembrane segments (helical) span residues 6–26 and 33–53; these read VCVT…RFYL and VLYL…ICLI. The disordered stretch occupies residues 85-153; that stretch reads GSPQQQPYGA…GNYPPPYGPQ (69 aa). Tandem repeats lie at residues 89 to 96, 97 to 104, 105 to 112, 113 to 120, 121 to 128, and 129 to 136. The tract at residues 89–136 is 6 X 8 AA tandem repeat of Q-Q-P-Y-G-A-P-P; that stretch reads QQPYGAPPQQPYGAPPQQPYGAPPQQPYGAPPQQPYGAPPPQPYGAPP. Residues 93–153 show a composition bias toward pro residues; sequence GAPPQQPYGA…GNYPPPYGPQ (61 aa).

Belongs to the TM2 family.

It localises to the membrane. This chain is TM2 domain-containing protein DDB_G0277895, found in Dictyostelium discoideum (Social amoeba).